Consider the following 33-residue polypeptide: uncharacterized protein (33 aa).

It is found in the cytoplasm. It localises to the nucleus. This is an uncharacterized protein from Schizosaccharomyces pombe (strain 972 / ATCC 24843) (Fission yeast).